The chain runs to 349 residues: MTHHETSAVDASSASMHVRSTIDVPPDLVVGLLGSADENLRALERMLSADLHVRGNTVAFSGEPADVALAERAISELVAIVASGHPLTPEVVRHGVAMLVGTGNESPAEVLTLDILLRRGKTVRPKTLNQKRYVDAIDANTIVFGIGPAGTGKTYLAMAKAVNALQTKQVTRIILTRPAVEAGERLGFLPGTLSEKIDPYLRPLYDALYDMMDPELIPKLMSSGVIEVASLAYMRGRTLNDAFIVLDEAQNTTAEQMKMFLTRLGFGSKVVVTGDVTQIDLPGGARSGLRAAVDILEHIDDIYVAELASVDVVRHRLVSEIVDAYAEYEEHDLGMNRAARRASGARNRR.

G147–T154 provides a ligand contact to ATP.

It belongs to the PhoH family.

The protein localises to the cytoplasm. The polypeptide is PhoH-like protein (Mycobacterium leprae (strain TN)).